Reading from the N-terminus, the 219-residue chain is Octanoyltransferase (219 aa).

The 176-residue stretch at 34–209 (SESPDELWIV…TFSQLLGYQH (176 aa)) folds into the BPL/LPL catalytic domain. Substrate-binding positions include 73-80 (RGGQVTYH), 140-142 (SLG), and 153-155 (GLA). Catalysis depends on C171, which acts as the Acyl-thioester intermediate.

The protein belongs to the LipB family.

The protein resides in the cytoplasm. It carries out the reaction octanoyl-[ACP] + L-lysyl-[protein] = N(6)-octanoyl-L-lysyl-[protein] + holo-[ACP] + H(+). The protein operates within protein modification; protein lipoylation via endogenous pathway; protein N(6)-(lipoyl)lysine from octanoyl-[acyl-carrier-protein]: step 1/2. Functionally, catalyzes the transfer of endogenously produced octanoic acid from octanoyl-acyl-carrier-protein onto the lipoyl domains of lipoate-dependent enzymes. Lipoyl-ACP can also act as a substrate although octanoyl-ACP is likely to be the physiological substrate. This chain is Octanoyltransferase, found in Shewanella putrefaciens (strain CN-32 / ATCC BAA-453).